The following is a 438-amino-acid chain: Anthranilate synthase component 1 (438 aa).

L-tryptophan-binding positions include Ser-45 and 220 to 222 (PYL). 255 to 256 (GT) lines the chorismate pocket. Mg(2+) is bound at residue Glu-282. Residues Tyr-370, Arg-389, 405–407 (GAG), and Gly-407 contribute to the chorismate site. Glu-420 is a binding site for Mg(2+).

Belongs to the anthranilate synthase component I family. As to quaternary structure, heterotetramer consisting of two non-identical subunits: a beta subunit (TrpG) and a large alpha subunit (TrpE). It depends on Mg(2+) as a cofactor.

It catalyses the reaction chorismate + L-glutamine = anthranilate + pyruvate + L-glutamate + H(+). Its pathway is amino-acid biosynthesis; L-tryptophan biosynthesis; L-tryptophan from chorismate: step 1/5. Feedback inhibited by tryptophan. Part of a heterotetrameric complex that catalyzes the two-step biosynthesis of anthranilate, an intermediate in the biosynthesis of L-tryptophan. In the first step, the glutamine-binding beta subunit (TrpG) of anthranilate synthase (AS) provides the glutamine amidotransferase activity which generates ammonia as a substrate that, along with chorismate, is used in the second step, catalyzed by the large alpha subunit of AS (TrpE) to produce anthranilate. In the absence of TrpG, TrpE can synthesize anthranilate directly from chorismate and high concentrations of ammonia. The chain is Anthranilate synthase component 1 (trpE) from Aeropyrum pernix (strain ATCC 700893 / DSM 11879 / JCM 9820 / NBRC 100138 / K1).